The following is a 91-amino-acid chain: Late embryogenis abundant protein 2 (91 aa).

The tract at residues 47-72 is disordered; the sequence is KRAGEASSEKAPWVPDPKTGYYRPET.

This sequence belongs to the LEA type 3 family.

The protein localises to the cytoplasm. The protein resides in the nucleus. The sequence is that of Late embryogenis abundant protein 2 from Arabidopsis thaliana (Mouse-ear cress).